The sequence spans 811 residues: Receptor-like protein 46 (811 aa).

Positions 1–21 are cleaved as a signal peptide; that stretch reads MSKQCLLSCFLFFCFFIPQLS. The Extracellular portion of the chain corresponds to 22 to 782; sequence FSCPQDQRQS…EEEDKEEEET (761 aa). Residues asparagine 46, asparagine 71, asparagine 128, and asparagine 143 are each glycosylated (N-linked (GlcNAc...) asparagine). 24 LRR repeats span residues 104–128, 129–153, 155–177, 178–201, 203–225, 226–249, 251–273, 275–298, 299–322, 324–348, 349–369, 370–395, 397–419, 421–442, 443–466, 468–488, 490–510, 511–534, 536–560, 561–583, 643–665, 666–688, 690–713, and 714–738; these read INSLVGLDVSFNNIQGEIPGYAFVN, LTSLISLDMCCNRFNGSIPHELFSL, NLQRLDLSRNVIGGTLSGDIKEL, KNLQELILDENLIGGAIPSEIGSL, ELLTLTLRQNMFNSSIPSSVSRL, TKLKTIDLQNNFLSSKIPDDIGNL, NLSTLSLSMNKLSGGIPSSIHNL, NLETLQLENNNGLSGEIPAAWLFG, LQKLKVLRLEGNNKLQWNNNGYVF, QFKLTHLSLRSCGLEGNIPDWLKNQ, TALVYLDLSINRLEGRFPKWL, ADLKIRNITLSDNRLTGSLPPNLFQR, SLYYLVLSRNNFSGQIPDTIGES, VMVLMLSENNFSGSVPKSITKI, PFLKLLDLSKNRLSGEFPRFRPES, LEWLDISSNEFSGDVPAYFGG, TSMLLMSQNNFSGEFPQNFRN, LSYLIRLDLHDNKISGTVASLISQ, SSSVEVLSLRNNSLKGSIPEGISNL, TSLKVLDLSENNLDGYLPSSLGN, LYTLLDLSKNKLHGEIPTSLGNL, KSLKVLNLSNNEFSGLIPQSFGD, EKVESLDLSHNNLTGEIPKTLSKL, and SELNTLDLRNNKLKGRIPESPQLDR. Asparagine 215 carries an N-linked (GlcNAc...) asparagine glycan. Asparagine 251 is a glycosylation site (N-linked (GlcNAc...) asparagine). The N-linked (GlcNAc...) asparagine glycan is linked to asparagine 347. Asparagine 376, asparagine 407, and asparagine 430 each carry an N-linked (GlcNAc...) asparagine glycan. Residues asparagine 499 and asparagine 510 are each glycosylated (N-linked (GlcNAc...) asparagine). 3 N-linked (GlcNAc...) asparagine glycosylation sites follow: asparagine 546, asparagine 559, and asparagine 583. Residues asparagine 672 and asparagine 701 are each glycosylated (N-linked (GlcNAc...) asparagine). N-linked (GlcNAc...) asparagine glycosylation is present at asparagine 747. The helical transmembrane segment at 783 to 803 threads the bilayer; it reads IFSWNAAAIGCSCGFLIAVVF. The Cytoplasmic portion of the chain corresponds to 804 to 811; the sequence is MSYNELWK.

It belongs to the RLP family.

The protein resides in the cell membrane. In Arabidopsis thaliana (Mouse-ear cress), this protein is Receptor-like protein 46.